We begin with the raw amino-acid sequence, 221 residues long: Kynurenine formamidase (221 aa).

Phe-30 is a binding site for substrate. His-60, His-64, and Asp-66 together coordinate Zn(2+). His-70 serves as the catalytic Proton donor/acceptor. His-172 and Glu-184 together coordinate Zn(2+).

The protein belongs to the Cyclase 1 superfamily. KynB family. In terms of assembly, homodimer. Requires Zn(2+) as cofactor.

The catalysed reaction is N-formyl-L-kynurenine + H2O = L-kynurenine + formate + H(+). Its pathway is amino-acid degradation; L-tryptophan degradation via kynurenine pathway; L-kynurenine from L-tryptophan: step 2/2. In terms of biological role, catalyzes the hydrolysis of N-formyl-L-kynurenine to L-kynurenine, the second step in the kynurenine pathway of tryptophan degradation. This chain is Kynurenine formamidase, found in Polaromonas sp. (strain JS666 / ATCC BAA-500).